Reading from the N-terminus, the 276-residue chain is MSGAPIGVFDSGVGGLTVARAILDQLPGESLLYIGDTAHAPYGPRPIAEVRRYALAALDELVSAGVKLLVIACNSASAACLRDARERYDVPVVEVIVPATRRAVAATRSGRVGVIGTVATITSRAYEDAFAAAAGTELVSVACPAFVDFVERGITSGRQLLGLTEAYLAPLQEADVDTVILGCTHYPLLTGVIGLVMGEGVTLVSSAEETAKDTYRVLARDGLFRDPDLPPPAHRFLTTGDPAAFARVGRRFLGPEITAVSIAPAAAPRQAQAVGR.

Residues 10–11 and 42–43 each bind substrate; these read DS and YG. The active-site Proton donor/acceptor is the C73. Substrate is bound at residue 74–75; sequence NS. The active-site Proton donor/acceptor is the C183. Position 184-185 (184-185) interacts with substrate; that stretch reads TH.

This sequence belongs to the aspartate/glutamate racemases family.

The catalysed reaction is L-glutamate = D-glutamate. It participates in cell wall biogenesis; peptidoglycan biosynthesis. Functionally, provides the (R)-glutamate required for cell wall biosynthesis. In Parafrankia sp. (strain EAN1pec), this protein is Glutamate racemase.